The sequence spans 72 residues: PI-stichotoxin-Hcr2k (72 aa).

The signal sequence occupies residues 1–9 (GFYFRSIQG). A propeptide spanning residues 10–16 (FYFKRIQ) is cleaved from the precursor. The 51-residue stretch at 20–70 (CSEPKKVGRCRRSFPRFYFDSETGKCTPFIYGGCGGNGNNFETLHACRAIC) folds into the BPTI/Kunitz inhibitor domain. Intrachain disulfides connect Cys20–Cys70, Cys29–Cys53, and Cys45–Cys66.

Belongs to the venom Kunitz-type family. Sea anemone type 2 potassium channel toxin subfamily.

It is found in the nematocyst. The protein resides in the secreted. In terms of biological role, serine protease inhibitor that also shows protective effect in a cytotoxicity model. It inhibits the serine protease trypsin (Ki=630 nM). It significantly increases neuroblastoma cell viability in an in vitro neurotoxicity model, being a consequence of an effective decrease of reactive oxygen species (ROS) level in the cells. It also seems to protect cells by inhibiting ATP-induced purinoceptor (P2RX7) activation. This Radianthus crispa (Leathery sea anemone) protein is PI-stichotoxin-Hcr2k.